We begin with the raw amino-acid sequence, 365 residues long: Chorismate synthase (365 aa).

NADP(+)-binding residues include arginine 48 and arginine 54. Residues 131-133 (RSS), 243-244 (NA), glycine 288, 303-307 (KPTSS), and arginine 329 contribute to the FMN site.

Belongs to the chorismate synthase family. Homotetramer. FMNH2 serves as cofactor.

It catalyses the reaction 5-O-(1-carboxyvinyl)-3-phosphoshikimate = chorismate + phosphate. It functions in the pathway metabolic intermediate biosynthesis; chorismate biosynthesis; chorismate from D-erythrose 4-phosphate and phosphoenolpyruvate: step 7/7. Its function is as follows. Catalyzes the anti-1,4-elimination of the C-3 phosphate and the C-6 proR hydrogen from 5-enolpyruvylshikimate-3-phosphate (EPSP) to yield chorismate, which is the branch point compound that serves as the starting substrate for the three terminal pathways of aromatic amino acid biosynthesis. This reaction introduces a second double bond into the aromatic ring system. The polypeptide is Chorismate synthase (Sinorhizobium medicae (strain WSM419) (Ensifer medicae)).